The following is a 253-amino-acid chain: Tetraspanin-11 (253 aa).

4 helical membrane-spanning segments follow: residues 19 to 39 (LLFIFNFFFWVGGAAVMAVGV), 63 to 83 (ILIFAGALVMVTGFLGFGAVI), 90 to 110 (LSAYFCLLLAIFLVELVAGVL), and 220 to 240 (LLLMGAVGIGVACLQICGMIL).

This sequence belongs to the tetraspanin (TM4SF) family.

The protein localises to the membrane. The polypeptide is Tetraspanin-11 (TSPAN11) (Bos taurus (Bovine)).